Reading from the N-terminus, the 445-residue chain is Arginine biosynthesis bifunctional protein ArgJ, mitochondrial (445 aa).

Substrate contacts are provided by T189, K215, T226, E312, N440, and S445. The active-site Nucleophile is the T226.

It belongs to the ArgJ family. Heterodimer of an alpha and a beta chain. In terms of processing, the alpha and beta chains are autoproteolytically processed from a single precursor protein within the mitochondrion.

It localises to the mitochondrion matrix. The catalysed reaction is N(2)-acetyl-L-ornithine + L-glutamate = N-acetyl-L-glutamate + L-ornithine. It catalyses the reaction L-glutamate + acetyl-CoA = N-acetyl-L-glutamate + CoA + H(+). It functions in the pathway amino-acid biosynthesis; L-arginine biosynthesis; L-ornithine and N-acetyl-L-glutamate from L-glutamate and N(2)-acetyl-L-ornithine (cyclic): step 1/1. It participates in amino-acid biosynthesis; L-arginine biosynthesis; N(2)-acetyl-L-ornithine from L-glutamate: step 1/4. In terms of biological role, catalyzes two activities which are involved in the cyclic version of arginine biosynthesis: the synthesis of acetylglutamate from glutamate and acetyl-CoA, and of ornithine by transacetylation between acetylornithine and glutamate. This Schizosaccharomyces pombe (strain 972 / ATCC 24843) (Fission yeast) protein is Arginine biosynthesis bifunctional protein ArgJ, mitochondrial.